We begin with the raw amino-acid sequence, 406 residues long: Olfactomedin-like protein 3 (406 aa).

A signal peptide spans 1–21 (MGPSTPLLILFLLSWSGPLQG). The stretch at 25–101 (HLVEYMERRL…REVDYLETQN (77 aa)) forms a coiled coil. In terms of domain architecture, Olfactomedin-like spans 134 to 401 (DCGYTISQVR…QIVYKLEMRK (268 aa)). The cysteines at positions 135 and 328 are disulfide-linked. N-linked (GlcNAc...) asparagine glycosylation is found at asparagine 177 and asparagine 248.

The protein belongs to the OLFML3 family. Abundant in placenta, moderate in liver and heart, whereas fairly weak in other tissues examined. On term placenta, mainly localized extracellularly surrounding the syncytiotrophoblastic cells and very rarely expressed in the maternal decidua layer.

The protein localises to the secreted. Functionally, secreted scaffold protein that plays an essential role in dorsoventral patterning during early development. Stabilizes axial formation by restricting chordin (CHRD) activity on the dorsal side. Acts by facilitating the association between the tolloid proteases and their substrate chordin (CHRD), leading to enhance chordin (CHRD) degradation. May have matrix-related function involved in placental and embryonic development, or play a similar role in other physiological processes. This Homo sapiens (Human) protein is Olfactomedin-like protein 3 (OLFML3).